The primary structure comprises 307 residues: Olfactory receptor 5AC1 (307 aa).

Over 1-28 (MAEENKILVTHFVLTGLTDHPGLQAPLF) the chain is Extracellular. The helical transmembrane segment at 29-49 (LVFLVIYLITLVGNLGLMALI) threads the bilayer. Over 50–56 (WKDPHLH) the chain is Cytoplasmic. The helical transmembrane segment at 57 to 77 (TPIYLFLGSLAFADACTSSSV) threads the bilayer. Over 78-99 (TSKMLINFLSKNHMLSMAKCAT) the chain is Extracellular. A disulfide bridge connects residues cysteine 97 and cysteine 179. The chain crosses the membrane as a helical span at residues 100–120 (QFYFFGSNATTECFLLVVMAY). The Cytoplasmic segment spans residues 121–143 (DRYVAICNPLLYPVVMSNSLCTQ). A helical membrane pass occupies residues 144 to 164 (FIGISYFIGFLHSAIHVGLLF). Residues 165-195 (RLTFCRSNIIHYFYCEILQLFKISCTNPTVN) lie on the Extracellular side of the membrane. The chain crosses the membrane as a helical span at residues 196–216 (ILLIFIFSAFIQVFTFMTLIV). Topologically, residues 217 to 239 (SYSYILSAILKKKSEKGRSKAFS) are cytoplasmic. A helical transmembrane segment spans residues 240–260 (TCSAHLLSVSLFYGTLFFMYV). Residues 261–271 (SSRSGSAADQA) lie on the Extracellular side of the membrane. Residues 272–292 (KMYSLFYTIIIPLLNPFIYSL) form a helical membrane-spanning segment. The Cytoplasmic segment spans residues 293–307 (RNKEVIDALRRIMKK).

This sequence belongs to the G-protein coupled receptor 1 family.

It is found in the cell membrane. Its function is as follows. Odorant receptor. This is Olfactory receptor 5AC1 (OR5AC1) from Homo sapiens (Human).